Consider the following 1494-residue polypeptide: DNA-directed RNA polymerase subunit beta' (1494 aa).

Cys-67, Cys-69, Cys-82, and Cys-85 together coordinate Zn(2+). 3 residues coordinate Mg(2+): Asp-499, Asp-501, and Asp-503. Residues Cys-868, Cys-944, Cys-951, and Cys-954 each coordinate Zn(2+).

This sequence belongs to the RNA polymerase beta' chain family. The RNAP catalytic core consists of 2 alpha, 1 beta, 1 beta' and 1 omega subunit. When a sigma factor is associated with the core the holoenzyme is formed, which can initiate transcription. Requires Mg(2+) as cofactor. Zn(2+) serves as cofactor.

It carries out the reaction RNA(n) + a ribonucleoside 5'-triphosphate = RNA(n+1) + diphosphate. DNA-dependent RNA polymerase catalyzes the transcription of DNA into RNA using the four ribonucleoside triphosphates as substrates. The chain is DNA-directed RNA polymerase subunit beta' from Chlorobaculum parvum (strain DSM 263 / NCIMB 8327) (Chlorobium vibrioforme subsp. thiosulfatophilum).